Consider the following 280-residue polypeptide: tRNA pseudouridine synthase A (280 aa).

Asp-60 (nucleophile) is an active-site residue. Tyr-119 contacts substrate.

Belongs to the tRNA pseudouridine synthase TruA family. As to quaternary structure, homodimer.

It carries out the reaction uridine(38/39/40) in tRNA = pseudouridine(38/39/40) in tRNA. In terms of biological role, formation of pseudouridine at positions 38, 39 and 40 in the anticodon stem and loop of transfer RNAs. This chain is tRNA pseudouridine synthase A, found in Treponema pallidum (strain Nichols).